The primary structure comprises 849 residues: Dopamine receptor 2 (849 aa).

Topologically, residues 1 to 39 (MEAGETWNVSLEWPPPSLDLSTITQTPSTIVGSGIPLNY) are extracellular. N-linked (GlcNAc...) asparagine glycosylation is present at Asn8. A helical membrane pass occupies residues 40-60 (AGLSLIVIPLITLLGNLLVII). At 61–70 (SVLRYRALQS) the chain is on the cytoplasmic side. The helical transmembrane segment at 71–91 (AINFLILGLAVADLLVAIIVM) threads the bilayer. Over 92-112 (PYAVYVYVTNGDWYLGNLMCD) the chain is Extracellular. Cys111 and Cys190 are oxidised to a cystine. The chain crosses the membrane as a helical span at residues 113–133 (IYMASDVCCSTASILLLAVIS). Over 134–155 (FDRYRAVSLPIQYSRQSQNVKR) the chain is Cytoplasmic. A helical transmembrane segment spans residues 156 to 176 (VWTLIAVIWLVSLTLASPMVF). Topologically, residues 177–203 (GVNVRPPDANPYECRFYNAEFSILSSM) are extracellular. The interval 183 to 849 (PDANPYECRF…HHFSNKQAHV (667 aa)) is required for the interaction with gpa-14. The helical transmembrane segment at 204-224 (ISFVIPCFLVLFVYIRIIIAL) threads the bilayer. Residues 225 to 759 (KKREKAAKMR…QRKEKRATKT (535 aa)) are Cytoplasmic-facing. Positions 450–515 (RRSSYADDSQ…NNSRTASITN (66 aa)) are disordered. Low complexity predominate over residues 457–470 (DSQPTSSQTSSGDG). A compositionally biased stretch (basic residues) spans 477 to 498 (GQKRFRNLSRNYSTKHHRKVVK). The span at 501–515 (RGNSRNNSRTASITN) shows a compositional bias: polar residues. The chain crosses the membrane as a helical span at residues 760-780 (LGVVVGVFLVCWVPFFVINIL). Topologically, residues 781–798 (NAVCILLNKDSCQVGYDL) are extracellular. Residues 799-819 (FFYCTWIGYMNSFMNPIIYTI) form a helical membrane-spanning segment. Over 820–849 (FNTEFRRAFKSIIFGRNSTRHHFSNKQAHV) the chain is Cytoplasmic.

It belongs to the G-protein coupled receptor 1 family. Interacts (via C-terminus) with the G-alpha protein gpa-14; the interaction is direct. In terms of tissue distribution, expressed in all dopaminergic neurons. Expressed in neurons around the nerve ring and the posterior side of the body including PDE neurons. In hermaphrodites, expressed in the head and tail ganglia including in the RIA interneuron pair, and in a subset of sublateral interneurons and the PDA neuron in the tail. Expressed in cholinergic SIA neurons. Also expressed in the male tail. In males, expressed in the dorsal spicule protractor, ventral spicule protractor, dorsal spicule retractor and ventral spicule retractor muscles and the sensory post-cloacal sensilla B (PCB) neuron. In males, expressed in the sensory hook neurons HOA.

The protein resides in the cell membrane. Functionally, G-protein coupled receptor which binds to the neurotransmitter dopamine with high affinity leading to the activation of an associated G-protein and downstream signaling pathways. Couples to G-proteins to inhibit adenylate cyclase (AC) activity and cAMP production. Inhibits synaptic vesicle fusion to negatively regulate the release of dopamine at dopaminergic neuron synapses. Antagonizes octopamine signaling in response to food by promoting the dopamine-mediated suppression of crh-1/CREB1 transcription factor activation in cholinergic SIA neurons. This is most likely in association with the G(o)-alpha G-protein subunit goa-1. In association with the G-alpha protein gpa-14, modulates two types of learning behavior: touch habituation and chemosensory associative conditioning. May act partly via tsp-17 to negatively regulate dopamine reuptake transporter dat-1 activity. Plays a role in behavioral plasticity and regulates the decision-making process when conflicting alternatives are present. Promotes male mating behavior by antagonizing acetylcholine signaling to control the protrusions of copulatory spicules from the tail of males during hermaphrodite vulval location. Modulates unc-7 activity at gap junctions to promote inhibitory neuronal signaling transduction between chemosensory and mechanosensory neurons, and thus ensures spicule insertion attempts are confined to the hermaphrodite vulva during copulation. G-protein coupled receptor which binds to the neurotransmitter dopamine with high affinity leading to the activation of an associated G-protein and downstream signaling pathways. Couples to G-proteins to inhibit adenylate cyclase (AC) activity and cAMP production. This chain is Dopamine receptor 2, found in Caenorhabditis elegans.